A 387-amino-acid polypeptide reads, in one-letter code: MKQAVIVDCIRTPMGRSKAGVFRNVRAETLSAELMKGLLLRNPQLDPNLIEDVIWGCVQQTLEQGFNIARNASLLAGIPKTAGAVTVNRLCGSSMDAIHQAARAIMTGMGDTFIIGGVEHMGHVPMSHGVDFHPGLANNVAKASGMMGLTAEMLGKLHGITREQQDAFAVRSHQRAYAATIEGRFAKEIYGIEGHDANGALIKVLQDEVIRPETTMESLAALRPVFDPVNGTVTAGTSSALSDGASAMLIMEESKARALSLPIRARIRSMAVAGCDAAIMGYGPVPATQKALARAGITVADLDVIELNEAFAAQSLPCVKDLGLADVVDDKINLNGGAIALGHPLGCSGARISTTLINLMEDKDATLGLATMCIGLGQGIATVFERV.

Catalysis depends on Cys-91, which acts as the Acyl-thioester intermediate. Active-site proton acceptor residues include His-343 and Cys-373.

This sequence belongs to the thiolase-like superfamily. Thiolase family. As to quaternary structure, heterotetramer of two alpha chains (FadB) and two beta chains (FadA).

The protein resides in the cytoplasm. It carries out the reaction an acyl-CoA + acetyl-CoA = a 3-oxoacyl-CoA + CoA. Its pathway is lipid metabolism; fatty acid beta-oxidation. Its function is as follows. Catalyzes the final step of fatty acid oxidation in which acetyl-CoA is released and the CoA ester of a fatty acid two carbons shorter is formed. This is 3-ketoacyl-CoA thiolase from Shewanella sp. (strain W3-18-1).